Reading from the N-terminus, the 350-residue chain is GTPase Obg (350 aa).

Residues 1–159 (MKLVDEAEIE…RTLKLELKLL (159 aa)) enclose the Obg domain. The disordered stretch occupies residues 127 to 147 (NMHFKSSTNRSPRQALPGEPG). The OBG-type G domain occupies 160–337 (ADVGLLGFPN…IMSRIMAFFD (178 aa)). GTP is bound by residues 166–173 (GFPNAGKS), 191–195 (FTTLY), 213–216 (DIPG), 287–290 (NKAD), and 318–320 (SAL). Mg(2+)-binding residues include S173 and T193.

The protein belongs to the TRAFAC class OBG-HflX-like GTPase superfamily. OBG GTPase family. As to quaternary structure, monomer. Mg(2+) serves as cofactor.

The protein resides in the cytoplasm. Functionally, an essential GTPase which binds GTP, GDP and possibly (p)ppGpp with moderate affinity, with high nucleotide exchange rates and a fairly low GTP hydrolysis rate. Plays a role in control of the cell cycle, stress response, ribosome biogenesis and in those bacteria that undergo differentiation, in morphogenesis control. This is GTPase Obg from Stenotrophomonas maltophilia (strain R551-3).